The chain runs to 469 residues: 23S rRNA (uracil(1939)-C(5))-methyltransferase RlmD (469 aa).

The region spanning 11–69 (PKTSNQRLTVTVDKLDMNGVGVARWQNKPIFIAGVLPDEIVDVKVIEQKSKYARAKLIS) is the TRAM domain. Residues cysteine 82, cysteine 88, cysteine 91, and cysteine 178 each contribute to the [4Fe-4S] cluster site. Glutamine 300, phenylalanine 329, asparagine 334, glutamate 350, aspartate 377, and aspartate 399 together coordinate S-adenosyl-L-methionine. Cysteine 425 (nucleophile) is an active-site residue.

The protein belongs to the class I-like SAM-binding methyltransferase superfamily. RNA M5U methyltransferase family. RlmD subfamily.

It carries out the reaction uridine(1939) in 23S rRNA + S-adenosyl-L-methionine = 5-methyluridine(1939) in 23S rRNA + S-adenosyl-L-homocysteine + H(+). Functionally, catalyzes the formation of 5-methyl-uridine at position 1939 (m5U1939) in 23S rRNA. This Colwellia psychrerythraea (strain 34H / ATCC BAA-681) (Vibrio psychroerythus) protein is 23S rRNA (uracil(1939)-C(5))-methyltransferase RlmD.